A 125-amino-acid chain; its full sequence is Large ribosomal subunit protein bL17 (125 aa).

The protein belongs to the bacterial ribosomal protein bL17 family. Part of the 50S ribosomal subunit. Contacts protein L32.

In Blochmanniella floridana, this protein is Large ribosomal subunit protein bL17.